A 417-amino-acid polypeptide reads, in one-letter code: Gamma-glutamyl phosphate reductase (417 aa).

It belongs to the gamma-glutamyl phosphate reductase family.

The protein resides in the cytoplasm. The catalysed reaction is L-glutamate 5-semialdehyde + phosphate + NADP(+) = L-glutamyl 5-phosphate + NADPH + H(+). It participates in amino-acid biosynthesis; L-proline biosynthesis; L-glutamate 5-semialdehyde from L-glutamate: step 2/2. In terms of biological role, catalyzes the NADPH-dependent reduction of L-glutamate 5-phosphate into L-glutamate 5-semialdehyde and phosphate. The product spontaneously undergoes cyclization to form 1-pyrroline-5-carboxylate. The polypeptide is Gamma-glutamyl phosphate reductase (Haemophilus influenzae (strain PittEE)).